The following is a 520-amino-acid chain: Sensory neuron membrane protein 1 (520 aa).

At 1-5 (MKPKK) the chain is on the cytoplasmic side. The helical transmembrane segment at 6 to 26 (LGIIGGSLLAFGILICAIAFP) threads the bilayer. Residues 27 to 451 (PFLRSQVKKQ…KLKTVFKTIS (425 aa)) are Extracellular-facing. 3 N-linked (GlcNAc...) asparagine glycosylation sites follow: asparagine 64, asparagine 224, and asparagine 268. Disulfide bonds link cysteine 264-cysteine 329, cysteine 293-cysteine 348, and cysteine 331-cysteine 337. Residues 452–472 (IVGFMKWFTIVSGTCVSGAAA) form a helical membrane-spanning segment. Over 473-520 (ALFFKNKDKNKLDITKVTPQKGEEKKWPNQMTISTIQSAAVPPNLDAD) the chain is Cytoplasmic.

It belongs to the CD36 family.

The protein localises to the cell membrane. In terms of biological role, plays an olfactory role that is not restricted to pheromone sensitivity. The polypeptide is Sensory neuron membrane protein 1 (Apis mellifera (Honeybee)).